Reading from the N-terminus, the 132-residue chain is S-protein homolog 8 (132 aa).

Residues 1–20 (MHSLSWFLLVIGLSVGLSSG) form the signal peptide.

This sequence belongs to the plant self-incompatibility (S1) protein family. As to expression, mostly expressed in seedlings, stems, leaves and floral tissues, and, to a lower extent, in roots.

The protein localises to the secreted. The polypeptide is S-protein homolog 8 (Arabidopsis thaliana (Mouse-ear cress)).